Here is a 270-residue protein sequence, read N- to C-terminus: Acyl-[acyl-carrier-protein]--UDP-N-acetylglucosamine O-acyltransferase (270 aa).

This sequence belongs to the transferase hexapeptide repeat family. LpxA subfamily. In terms of assembly, homotrimer.

The protein resides in the cytoplasm. The enzyme catalyses a (3R)-hydroxyacyl-[ACP] + UDP-N-acetyl-alpha-D-glucosamine = a UDP-3-O-[(3R)-3-hydroxyacyl]-N-acetyl-alpha-D-glucosamine + holo-[ACP]. The protein operates within glycolipid biosynthesis; lipid IV(A) biosynthesis; lipid IV(A) from (3R)-3-hydroxytetradecanoyl-[acyl-carrier-protein] and UDP-N-acetyl-alpha-D-glucosamine: step 1/6. Involved in the biosynthesis of lipid A, a phosphorylated glycolipid that anchors the lipopolysaccharide to the outer membrane of the cell. This is Acyl-[acyl-carrier-protein]--UDP-N-acetylglucosamine O-acyltransferase from Helicobacter pylori (strain J99 / ATCC 700824) (Campylobacter pylori J99).